We begin with the raw amino-acid sequence, 194 residues long: Imidazoleglycerol-phosphate dehydratase (194 aa).

This sequence belongs to the imidazoleglycerol-phosphate dehydratase family.

The protein resides in the cytoplasm. The catalysed reaction is D-erythro-1-(imidazol-4-yl)glycerol 3-phosphate = 3-(imidazol-4-yl)-2-oxopropyl phosphate + H2O. It functions in the pathway amino-acid biosynthesis; L-histidine biosynthesis; L-histidine from 5-phospho-alpha-D-ribose 1-diphosphate: step 6/9. The chain is Imidazoleglycerol-phosphate dehydratase from Lacticaseibacillus paracasei (strain ATCC 334 / BCRC 17002 / CCUG 31169 / CIP 107868 / KCTC 3260 / NRRL B-441) (Lactobacillus paracasei).